The following is a 203-amino-acid chain: Large ribosomal subunit protein uL13 (203 aa).

Alanine 2 bears the N-acetylalanine mark. Arginine 59 bears the Citrulline mark. A Phosphoserine; by ZIPK/DAPK3 modification is found at serine 77. Arginine 140 bears the Citrulline mark. The residue at position 191 (lysine 191) is an N6-acetyllysine.

It belongs to the universal ribosomal protein uL13 family. In terms of assembly, component of the 60S ribosome. Component of the GAIT complex. Interacts with EIF4G1. In terms of processing, phosphorylation at Ser-77 upon interferon-gamma treatment in macrophages involves a DAPK1-DAPK3 kinase cascade and is causing release from the ribosome, association with the GAIT complex and subsequent involvement in transcript-selective translation inhibition. Post-translationally, citrullinated by PADI4.

The protein resides in the cytoplasm. Its function is as follows. Associated with ribosomes but is not required for canonical ribosome function and has extra-ribosomal functions. Component of the GAIT (gamma interferon-activated inhibitor of translation) complex which mediates interferon-gamma-induced transcript-selective translation inhibition in inflammation processes. Upon interferon-gamma activation and subsequent phosphorylation dissociates from the ribosome and assembles into the GAIT complex which binds to stem loop-containing GAIT elements in the 3'-UTR of diverse inflammatory mRNAs (such as ceruplasmin) and suppresses their translation. In the GAIT complex interacts with m7G cap-bound eIF4G at or near the eIF3-binding site and blocks the recruitment of the 43S ribosomal complex. Involved in methylation of rRNA. This chain is Large ribosomal subunit protein uL13 (Rpl13a), found in Mus musculus (Mouse).